A 116-amino-acid polypeptide reads, in one-letter code: Ferredoxin-like protein in nif region (116 aa).

The 28-residue stretch at 2–29 folds into the 4Fe-4S ferredoxin-type domain; the sequence is AYTITSQCISCKLCSSVCPTGAIKVAED. Residues C9, C12, C15, and C19 each contribute to the iron-sulfur cluster site.

The chain is Ferredoxin-like protein in nif region (fdxN) from Trichormus azollae (Anabaena azollae).